The following is a 708-amino-acid chain: MPRNLRFLSVVNHVTKQVPTTCMRCAVGCGHVHLGSENAYGLETVRGDPSHPVNNGLACGRGIRESADPAGEWLTRPLVREDGELVQTSWSDAMARVGATIRTAVATDPDEVAVLGSGQQTNEAAYALGKLARAGIGTRNYDANTTLCMASAVTAYYRAFGSDAPPPTYDDIPNAETHLVWGANPAVAHPVMFRWIRQSATDGRLVVVDPVETKTAAVADDHVSVAPGGDLALARAILRHLVDTDQIDESFVRSNTEGFDDVVSALPSVTDAAARAGVSLDTVEELAALLDAPTLIYWGMGVNQSVRGTATAGALVNLCLASGNLGPGTGPFSLTGQANSMGTRVCSSKGTWSGHRPFEHPDHRRAVAEAWDVPVSRLPDDSGPGPVGILDSSPSVVWTVATNPLAGFPDATAAREVLRDSFLVVQDAFRSDTVELADVVLPAATWGESEGTAMNMERTVSRIRAATETPPGVRQDLDIIADVAARVAPGLLPRPPVSPSAIFDEFAALTEGTDADCSGISYTRLDGERAVRWPAPEPNSDAGYRYYDPSTSRWTFPTPSGKARFSTLDGEPLPEPVDGDYPLTLTTGREADGYNTGVRSRSDTPEEPVARVNPETVDTYHDAVADTDGELRTTVVSRRASVSVTLDRDDAVPPGLVWLSIHHPMTNQLTSPAVDPQSNEPNFKQCAVRFVHPDAPAKADFLAAEVSD.

The 4Fe-4S Mo/W bis-MGD-type domain maps to 15 to 73 (TKQVPTTCMRCAVGCGHVHLGSENAYGLETVRGDPSHPVNNGLACGRGIRESADPAGEW). Residues Cys22, Cys25, Cys29, and Cys59 each coordinate [4Fe-4S] cluster. Positions 586–613 (TTGREADGYNTGVRSRSDTPEEPVARVN) are disordered.

Belongs to the prokaryotic molybdopterin-containing oxidoreductase family. NasA/NapA/NarB subfamily. Is probably a monomer. Initially characterized as a dimer of proteins with a MW of 105 and 50 kDa. Requires [4Fe-4S] cluster as cofactor. It depends on Mo-bis(molybdopterin guanine dinucleotide) as a cofactor.

It is found in the cytoplasm. It carries out the reaction nitrite + 2 oxidized [2Fe-2S]-[ferredoxin] + H2O = nitrate + 2 reduced [2Fe-2S]-[ferredoxin] + 2 H(+). The protein operates within nitrogen metabolism; nitrate reduction (assimilation). Its activity is regulated as follows. Inhibited by cyanide and azide. In terms of biological role, nitrate reductase is a key enzyme involved in the first step of nitrate assimilation. Catalyzes the reduction of nitrate to nitrite, using ferredoxin as the electron donor. Can use reduced methyl viologen but neither NADPH nor NADH as electron donors. The chain is Assimilatory nitrate reductase from Haloferax mediterranei (strain ATCC 33500 / DSM 1411 / JCM 8866 / NBRC 14739 / NCIMB 2177 / R-4) (Halobacterium mediterranei).